The chain runs to 274 residues: Orotidine 5'-phosphate decarboxylase (274 aa).

Lys-95 functions as the Proton donor in the catalytic mechanism.

It belongs to the OMP decarboxylase family. Type 2 subfamily.

It catalyses the reaction orotidine 5'-phosphate + H(+) = UMP + CO2. It participates in pyrimidine metabolism; UMP biosynthesis via de novo pathway; UMP from orotate: step 2/2. In Variovorax paradoxus (strain S110), this protein is Orotidine 5'-phosphate decarboxylase.